A 571-amino-acid chain; its full sequence is Gag-Pro polyprotein (571 aa).

Gly-2 is lipidated: N-myristoyl glycine; by host. Residues 100-103 (PPPY) carry the PPXY motif motif. 2 repeats span residues 342–362 (PPGP…CPTK) and 367–387 (PPGP…CPTL). 2 consecutive CCHC-type zinc fingers follow at residues 345 to 362 (PCYR…CPTK) and 370 to 387 (PCPI…CPTL). Thr-453 serves as the catalytic Protease; shared with dimeric partner.

Homodimer; the homodimers are part of the immature particles. Interacts with human TSG101 and NEDD4; these interactions are essential for budding and release of viral particles. As to quaternary structure, homodimer; further assembles as homohexamers. In terms of processing, specific enzymatic cleavages by the viral protease yield mature proteins. The polyprotein is cleaved during and after budding, this process is termed maturation. The protease is autoproteolytically processed at its N- and C-termini. Post-translationally, myristoylated. Myristoylation of the matrix (MA) domain mediates the transport and binding of Gag polyproteins to the host plasma membrane and is required for the assembly of viral particles.

It is found in the virion. Its function is as follows. The matrix domain targets Gag, Gag-Pro and Gag-Pro-Pol polyproteins to the plasma membrane via a multipartite membrane binding signal, that includes its myristoylated N-terminus. In terms of biological role, matrix protein. Forms the spherical core of the virus that encapsulates the genomic RNA-nucleocapsid complex. Functionally, binds strongly to viral nucleic acids and promote their aggregation. Also destabilizes the nucleic acids duplexes via highly structured zinc-binding motifs. Its function is as follows. The aspartyl protease mediates proteolytic cleavages of Gag and Gag-Pol polyproteins during or shortly after the release of the virion from the plasma membrane. Cleavages take place as an ordered, step-wise cascade to yield mature proteins. This process is called maturation. Displays maximal activity during the budding process just prior to particle release from the cell. The sequence is that of Gag-Pro polyprotein from Bovine leukemia virus (isolate Japanese BLV-1) (BLV).